A 91-amino-acid chain; its full sequence is CRISPR-associated endoribonuclease Cas2 2 (91 aa).

Aspartate 8 serves as a coordination point for Mg(2+).

It belongs to the CRISPR-associated endoribonuclease Cas2 protein family. Homodimer, forms a heterotetramer with a Cas1 homodimer. Mg(2+) is required as a cofactor.

Its function is as follows. CRISPR (clustered regularly interspaced short palindromic repeat), is an adaptive immune system that provides protection against mobile genetic elements (viruses, transposable elements and conjugative plasmids). CRISPR clusters contain sequences complementary to antecedent mobile elements and target invading nucleic acids. CRISPR clusters are transcribed and processed into CRISPR RNA (crRNA). Functions as a ssRNA-specific endoribonuclease. Involved in the integration of spacer DNA into the CRISPR cassette. The sequence is that of CRISPR-associated endoribonuclease Cas2 2 from Pyrobaculum aerophilum (strain ATCC 51768 / DSM 7523 / JCM 9630 / CIP 104966 / NBRC 100827 / IM2).